We begin with the raw amino-acid sequence, 449 residues long: 23S rRNA (uracil(1939)-C(5))-methyltransferase RlmD (449 aa).

Positions 12-70 (SKQLSAKQSFSVHQLDHLGAGIAQHQGKVVFIPGALPSETVQAQLTEQKKNYARAKLIK) constitute a TRAM domain. [4Fe-4S] cluster is bound by residues Cys-83, Cys-89, Cys-92, and Cys-170. S-adenosyl-L-methionine-binding residues include Gln-282, Phe-311, Asn-316, Glu-332, Asp-359, and Asp-379. Cys-405 functions as the Nucleophile in the catalytic mechanism.

The protein belongs to the class I-like SAM-binding methyltransferase superfamily. RNA M5U methyltransferase family. RlmD subfamily.

The enzyme catalyses uridine(1939) in 23S rRNA + S-adenosyl-L-methionine = 5-methyluridine(1939) in 23S rRNA + S-adenosyl-L-homocysteine + H(+). Catalyzes the formation of 5-methyl-uridine at position 1939 (m5U1939) in 23S rRNA. The protein is 23S rRNA (uracil(1939)-C(5))-methyltransferase RlmD of Shewanella sp. (strain MR-7).